Consider the following 62-residue polypeptide: SISACNGLKGHFLIEPLKLSDSEKTDLLNRSHDNAQLSPINLVVAVIMAHEMGHGMVLPGTK.

In terms of domain architecture, Peptidase M12B spans 24 to 54 (KTDLLNRSHDNAQLSPINLVVAVIMAHEMGH). N-linked (GlcNAc...) asparagine glycosylation occurs at Asn29. His50 provides a ligand contact to Zn(2+). Glu51 is a catalytic residue. Zn(2+) is bound at residue His54.

It belongs to the venom metalloproteinase (M12B) family. P-III subfamily. P-IIIc sub-subfamily. Dimer. Zn(2+) serves as cofactor. In terms of processing, the N-terminus is blocked. As to expression, expressed by the venom gland.

It localises to the secreted. With respect to regulation, inhibited by EDTA, and 1,10-phenanthroline. Snake venom Zinc metalloproteinase that inhibits ADP-induced platelet aggregation and inhibits the alpha-5/beta-1 (ITGA5/ITGB1) integrin, a fibronectin receptor. Has caseinolytic activity. Induces the detachment of cells that are bound to fibronectin. This Bothrops alternatus (Urutu) protein is Zinc metalloproteinase-disintegrin-like BaG.